Reading from the N-terminus, the 81-residue chain is Putative chemokine-related protein B42 (81 aa).

Disulfide bonds link cysteine 7/cysteine 73, cysteine 8/cysteine 29, and cysteine 11/cysteine 45.

As to expression, expressed in placenta, heart, lung, liver, pancreas, skeletal muscle and brain.

It is found in the cytoplasm. The polypeptide is Putative chemokine-related protein B42 (Homo sapiens (Human)).